The sequence spans 271 residues: 3-methyl-2-oxobutanoate hydroxymethyltransferase (271 aa).

Mg(2+)-binding residues include D53 and D92. 3-methyl-2-oxobutanoate-binding positions include 53–54, D92, and K120; that span reads DS. E122 is a Mg(2+) binding site. E189 acts as the Proton acceptor in catalysis.

It belongs to the PanB family. As to quaternary structure, homodecamer; pentamer of dimers. Mg(2+) is required as a cofactor.

It localises to the cytoplasm. The catalysed reaction is 3-methyl-2-oxobutanoate + (6R)-5,10-methylene-5,6,7,8-tetrahydrofolate + H2O = 2-dehydropantoate + (6S)-5,6,7,8-tetrahydrofolate. The protein operates within cofactor biosynthesis; (R)-pantothenate biosynthesis; (R)-pantoate from 3-methyl-2-oxobutanoate: step 1/2. Functionally, catalyzes the reversible reaction in which hydroxymethyl group from 5,10-methylenetetrahydrofolate is transferred onto alpha-ketoisovalerate to form ketopantoate. In Burkholderia thailandensis (strain ATCC 700388 / DSM 13276 / CCUG 48851 / CIP 106301 / E264), this protein is 3-methyl-2-oxobutanoate hydroxymethyltransferase.